Consider the following 186-residue polypeptide: Single-stranded DNA-binding protein 1 (186 aa).

The 108-residue stretch at 1–108 (MDATVTVVGN…LEIDEIGPTL (108 aa)) folds into the SSB domain. The disordered stretch occupies residues 120-186 (QAGHGVSPDP…EDFDSDEVPF (67 aa)). The span at 132-141 (DSQTGQGIDS) shows a compositional bias: polar residues. Residues 175–186 (SYEDFDSDEVPF) are compositionally biased toward acidic residues.

Homotetramer.

The chain is Single-stranded DNA-binding protein 1 (ssb1) from Tropheryma whipplei (strain TW08/27) (Whipple's bacillus).